Reading from the N-terminus, the 218-residue chain is Hypoxanthine-guanine phosphoribosyltransferase (218 aa).

Residues K69, 134–142 (EDIIDTGKT), K166, 186–188 (KFV), and D194 each bind GMP. Residue D138 is the Proton acceptor of the active site. Residue D194 participates in Mg(2+) binding.

The protein belongs to the purine/pyrimidine phosphoribosyltransferase family. Homotetramer. Requires Mg(2+) as cofactor.

It localises to the cytoplasm. The enzyme catalyses IMP + diphosphate = hypoxanthine + 5-phospho-alpha-D-ribose 1-diphosphate. It carries out the reaction GMP + diphosphate = guanine + 5-phospho-alpha-D-ribose 1-diphosphate. It functions in the pathway purine metabolism; IMP biosynthesis via salvage pathway; IMP from hypoxanthine: step 1/1. Converts guanine to guanosine monophosphate, and hypoxanthine to inosine monophosphate. Transfers the 5-phosphoribosyl group from 5-phosphoribosylpyrophosphate onto the purine. Plays a central role in the generation of purine nucleotides through the purine salvage pathway. The protein is Hypoxanthine-guanine phosphoribosyltransferase (HPRT1) of Gallus gallus (Chicken).